The following is a 155-amino-acid chain: Putative pre-16S rRNA nuclease (155 aa).

This sequence belongs to the YqgF nuclease family.

It localises to the cytoplasm. In terms of biological role, could be a nuclease involved in processing of the 5'-end of pre-16S rRNA. The protein is Putative pre-16S rRNA nuclease of Wolbachia sp. subsp. Drosophila simulans (strain wRi).